The primary structure comprises 206 residues: Uridine kinase (206 aa).

Residue 11-18 participates in ATP binding; it reads GGSGSGKT.

It belongs to the uridine kinase family.

It localises to the cytoplasm. It catalyses the reaction uridine + ATP = UMP + ADP + H(+). It carries out the reaction cytidine + ATP = CMP + ADP + H(+). The protein operates within pyrimidine metabolism; CTP biosynthesis via salvage pathway; CTP from cytidine: step 1/3. It participates in pyrimidine metabolism; UMP biosynthesis via salvage pathway; UMP from uridine: step 1/1. This is Uridine kinase from Macrococcus caseolyticus (strain JCSC5402) (Macrococcoides caseolyticum).